We begin with the raw amino-acid sequence, 481 residues long: Regulator of G-protein signaling 1 (481 aa).

Residues 1–31 are disordered; it reads MPALHNPSSPPPSYEAVTSYRNGNSIDSGDK. Residues 33–227 are fungal-DR; that stretch reads QQCSRLMKIT…SVHEIGKSKN (195 aa). Residues 232-312 enclose the DEP domain; it reads PVYSVSSPSP…KGVSYFLTGK (81 aa). The 131-residue stretch at 344–474 folds into the RGS domain; it reads ILETILRKPN…AGDSLLKFLE (131 aa).

Its subcellular location is the nucleus. It is found in the cytoplasm. In terms of biological role, negatively regulates pheromone signaling during mating. Acts in a negative feedback loop that is essential for the mating process. This loop acts to down-regulate cellular sensitivity to pheromone. Activated by ste11. This is Regulator of G-protein signaling 1 (rgs1) from Schizosaccharomyces pombe (strain 972 / ATCC 24843) (Fission yeast).